The sequence spans 209 residues: LexA repressor (209 aa).

The H-T-H motif DNA-binding region spans 28 to 48; that stretch reads RVELAKILGFRSANAAEEHLK. Active-site for autocatalytic cleavage activity residues include Ser126 and Lys163.

The protein belongs to the peptidase S24 family. In terms of assembly, homodimer.

It carries out the reaction Hydrolysis of Ala-|-Gly bond in repressor LexA.. In terms of biological role, represses a number of genes involved in the response to DNA damage (SOS response), including recA and lexA. In the presence of single-stranded DNA, RecA interacts with LexA causing an autocatalytic cleavage which disrupts the DNA-binding part of LexA, leading to derepression of the SOS regulon and eventually DNA repair. This chain is LexA repressor, found in Psychromonas ingrahamii (strain DSM 17664 / CCUG 51855 / 37).